The sequence spans 389 residues: 5-hydroxytryptamine receptor 1B (389 aa).

The interval 1–27 (MEETNTHCAPPPPAGSQTGVSQANLSS) is disordered. Over 1–45 (MEETNTHCAPPPPAGSQTGVSQANLSSAPPNCSTEGYIYQDSIAL) the chain is Extracellular. Residues 15 to 27 (GSQTGVSQANLSS) are compositionally biased toward polar residues. Residues N24 and N31 are each glycosylated (N-linked (GlcNAc...) asparagine). Residues 46–71 (PWKVLLILVLALFTLATTLSNAFVIA) form a helical membrane-spanning segment. Topologically, residues 72–85 (TVYRTRKLHTPANY) are cytoplasmic. The chain crosses the membrane as a helical span at residues 86–110 (LIASLAVTDLLVSILVMPISTMYTV). Over 111 to 118 (TGRWTLGQ) the chain is Extracellular. Residues 119–144 (VVCDFWLSSDITCCTASILHLCVIAL) form a helical membrane-spanning segment. A disulfide bond links C121 and C198. Ergotamine-binding residues include D128 and T133. The short motif at 145–147 (DRY) is the DRY motif; important for ligand-induced conformation changes and signaling element. The Cytoplasmic portion of the chain corresponds to 145–164 (DRYWAITDAVEYSAKRTPKR). A helical transmembrane segment spans residues 165-183 (AAVMIALVWVFSISISLPP). At 184–204 (FFWRQAKAEEEVSDCRVNTDH) the chain is on the extracellular side. V200 lines the ergotamine pocket. A helical membrane pass occupies residues 205–228 (MLYTVYSTVGAFYFPTLLLIALYG). Topologically, residues 229 to 314 (RIYVEARSRI…AARERKATKT (86 aa)) are cytoplasmic. The span at 258–271 (DSPGSTSSVTSVNS) shows a compositional bias: polar residues. Residues 258–281 (DSPGSTSSVTSVNSRAPDVPSESG) are disordered. Residues 315-336 (LGIILGAFIVCWLPFFIISLVM) form a helical membrane-spanning segment. The Extracellular segment spans residues 337–346 (PICKDACWFH). The chain crosses the membrane as a helical span at residues 347-369 (LAIFDFFTWLGYLNSLINPIIYT). The short motif at 364-368 (NPIIY) is the NPxxY motif; important for ligand-induced conformation changes and signaling element. Residues 370 to 389 (MSNEDFKQAFHKLIRFKCTG) are Cytoplasmic-facing. C387 carries the S-palmitoyl cysteine lipid modification.

Belongs to the G-protein coupled receptor 1 family. In terms of assembly, homodimer. Heterodimer with HTR1D. Phosphorylated. Desensitization of the receptor may be mediated by its phosphorylation. In terms of processing, palmitoylated.

The protein localises to the cell membrane. Functionally, G-protein coupled receptor for 5-hydroxytryptamine (serotonin). Also functions as a receptor for ergot alkaloid derivatives, various anxiolytic and antidepressant drugs and other psychoactive substances, such as lysergic acid diethylamide (LSD). Ligand binding causes a conformation change that triggers signaling via guanine nucleotide-binding proteins (G proteins) and modulates the activity of downstream effectors, such as adenylate cyclase. HTR1B is coupled to G(i)/G(o) G alpha proteins and mediates inhibitory neurotransmission by inhibiting adenylate cyclase activity. Arrestin family members inhibit signaling via G proteins and mediate activation of alternative signaling pathways. Regulates the release of 5-hydroxytryptamine, dopamine and acetylcholine in the brain, and thereby affects neural activity, nociceptive processing, pain perception, mood and behavior. Besides, plays a role in vasoconstriction of cerebral arteries. The protein is 5-hydroxytryptamine receptor 1B (HTR1B) of Felis catus (Cat).